A 226-amino-acid polypeptide reads, in one-letter code: Protein DEHYDRATION-INDUCED 19 (226 aa).

The interval 158 to 208 (FPTSDTEETSKPPISIPDDASVIKETPAQPWDSSIDSSLTREEREQKRKQA) is disordered. The span at 196–205 (LTREEREQKR) shows a compositional bias: basic and acidic residues.

The protein belongs to the Di19 family.

In Oryza sativa subsp. japonica (Rice), this protein is Protein DEHYDRATION-INDUCED 19 (DI19-1).